A 79-amino-acid chain; its full sequence is Small ribosomal subunit protein bS18 (79 aa).

This sequence belongs to the bacterial ribosomal protein bS18 family. Part of the 30S ribosomal subunit. Forms a tight heterodimer with protein bS6.

Binds as a heterodimer with protein bS6 to the central domain of the 16S rRNA, where it helps stabilize the platform of the 30S subunit. The protein is Small ribosomal subunit protein bS18 of Afipia carboxidovorans (strain ATCC 49405 / DSM 1227 / KCTC 32145 / OM5) (Oligotropha carboxidovorans).